We begin with the raw amino-acid sequence, 155 residues long: Small ribosomal subunit protein uS7c (155 aa).

The protein belongs to the universal ribosomal protein uS7 family. As to quaternary structure, part of the 30S ribosomal subunit.

Its subcellular location is the plastid. The protein resides in the chloroplast. In terms of biological role, one of the primary rRNA binding proteins, it binds directly to 16S rRNA where it nucleates assembly of the head domain of the 30S subunit. This Lactoris fernandeziana protein is Small ribosomal subunit protein uS7c (rps7).